We begin with the raw amino-acid sequence, 295 residues long: Probable phosphoglycerate mutase PMU1 (295 aa).

Histidine 61 acts as the Tele-phosphohistidine intermediate in catalysis. Catalysis depends on glutamate 170, which acts as the Proton donor/acceptor.

Belongs to the phosphoglycerate mutase family.

It is found in the cytoplasm. The protein resides in the nucleus. Probable phosphomutase that may have a function related to the manipulation of phosphate groups on carbohydrates. Reduces trehalose-6-phosphate levels when overexpressed in TPS2-deleted cells. Reduces 5'-Phosphoribosyl-4-carboxamide-5-aminoimidazole (AICAR) levels, a metabolic intermediate at the crossroads between AMP and histidine biosynthesis pathways, when overexpressed in a ADE3-ADE16-ADE17 triple deletant. The protein is Probable phosphoglycerate mutase PMU1 of Saccharomyces cerevisiae (strain ATCC 204508 / S288c) (Baker's yeast).